The primary structure comprises 465 residues: MIKINHLEIRFQGEQNSPYPGNGNLSNNAFLRIRAILERLGFSQRGIHGPVVHASSQIGGRDLRPAHGRGLELWLHPAGRGSGLPHPWRPALRLRAHRQPDRAPPARASEQPLRQGRRALRRRPDQRRHRPRMTAAALRLGAARIGPGLLAGLLMAVLAKLLSQSLHAPAPLLAVVLGMMLGALGLQGQLGAGLDVFAKPGLRLGVAMMGAQISWSEFAALGGPAVLASGAVVLGGLGIGALAGAALGLPLAEALIAAAACSICGASAALAASQAAPSSPENQRTTALVIVGVNLLSTVAMLAYPPIANALGLTAHQAGVFFGLSIHDVAQVAGAGASVSPEVAGTAALAKLSRILWLGPAVVLIGLMLTRTAQGGRISGLQAPPLFVWGFAALAAARGLNLIPPALVSALGACSGFLLLAGVGAISAKLGPKALLEVKPRLAILLVTLTVAVAILAYALTRIFF.

Residues 97 to 132 (HRQPDRAPPARASEQPLRQGRRALRRRPDQRRHRPR) are disordered. The span at 115 to 132 (QGRRALRRRPDQRRHRPR) shows a compositional bias: basic residues. The next 10 membrane-spanning stretches (helical) occupy residues 135–157 (AAAL…LMAV), 172–194 (LLAV…GAGL), 219–241 (AALG…GIGA), 251–273 (LAEA…LAAS), 286–308 (TALV…PPIA), 318–340 (AGVF…ASVS), 352–374 (LSRI…RTAQ), 378–400 (ISGL…ARGL), 405–427 (PALV…GAIS), and 442–464 (LAIL…TRIF).

Belongs to the UPF0324 family.

It localises to the cell membrane. In Caulobacter vibrioides (strain ATCC 19089 / CIP 103742 / CB 15) (Caulobacter crescentus), this protein is UPF0324 membrane protein CC_0425.